Here is a 287-residue protein sequence, read N- to C-terminus: Pantothenate synthetase (287 aa).

ATP is bound at residue 30-37 (MGNLHSGH). The active-site Proton donor is His-37. Gln-61 is a binding site for (R)-pantoate. Residue Gln-61 participates in beta-alanine binding. 149 to 152 (GEKD) is an ATP binding site. Gln-155 provides a ligand contact to (R)-pantoate. ATP is bound by residues Val-178 and 186 to 189 (LSSR).

This sequence belongs to the pantothenate synthetase family. In terms of assembly, homodimer.

It localises to the cytoplasm. It carries out the reaction (R)-pantoate + beta-alanine + ATP = (R)-pantothenate + AMP + diphosphate + H(+). Its pathway is cofactor biosynthesis; (R)-pantothenate biosynthesis; (R)-pantothenate from (R)-pantoate and beta-alanine: step 1/1. Catalyzes the condensation of pantoate with beta-alanine in an ATP-dependent reaction via a pantoyl-adenylate intermediate. In Pseudomonas entomophila (strain L48), this protein is Pantothenate synthetase.